The primary structure comprises 79 residues: CDC42 small effector protein 1 (79 aa).

Residues C10 and C11 are each lipidated (S-palmitoyl cysteine). A CRIB domain is found at 30-43 (IGEPMNFVHLTHIG). A disordered region spans residues 48 to 79 (GAGDGLAMTGAVQEQMRSKGNRDRPWSNSRGL). Positions 63–72 (MRSKGNRDRP) are enriched in basic and acidic residues.

It belongs to the CDC42SE/SPEC family. As to quaternary structure, interacts with CDC42 (in GTP-bound form). Interacts weakly with RAC1 and not at all with RHOA.

Its subcellular location is the cytoplasm. It is found in the cytoskeleton. It localises to the cell membrane. Probably involved in the organization of the actin cytoskeleton by acting downstream of CDC42, inducing actin filament assembly. Alters CDC42-induced cell shape changes. In activated T-cells, may play a role in CDC42-mediated F-actin accumulation at the immunological synapse. May play a role in early contractile events in phagocytosis in macrophages. This Bos taurus (Bovine) protein is CDC42 small effector protein 1 (CDC42SE1).